A 172-amino-acid polypeptide reads, in one-letter code: Adenine phosphoribosyltransferase (172 aa).

This sequence belongs to the purine/pyrimidine phosphoribosyltransferase family. In terms of assembly, homodimer.

The protein localises to the cytoplasm. The catalysed reaction is AMP + diphosphate = 5-phospho-alpha-D-ribose 1-diphosphate + adenine. It functions in the pathway purine metabolism; AMP biosynthesis via salvage pathway; AMP from adenine: step 1/1. Catalyzes a salvage reaction resulting in the formation of AMP, that is energically less costly than de novo synthesis. The protein is Adenine phosphoribosyltransferase of Polynucleobacter necessarius subsp. necessarius (strain STIR1).